The sequence spans 539 residues: Phosphatidylinositol 4-phosphate 5-kinase type-1 beta (539 aa).

The tract at residues 1-21 (MSSTAENGDAVPGKQNEEKTY) is disordered. A PIPK domain is found at 25-395 (ASSAIKGAIQ…RFLKFMNSRV (371 aa)). Phosphoserine is present on residues Ser445, Ser447, and Ser448.

Interacts with RAC1, AJUBA, PLD1, PLD2 and ARF1.

It localises to the cytoplasm. It is found in the cytosol. Its subcellular location is the cell membrane. The protein resides in the endomembrane system. The catalysed reaction is a 1,2-diacyl-sn-glycero-3-phospho-(1D-myo-inositol 4-phosphate) + ATP = a 1,2-diacyl-sn-glycero-3-phospho-(1D-myo-inositol-4,5-bisphosphate) + ADP + H(+). It carries out the reaction 1-octadecanoyl-2-(5Z,8Z,11Z,14Z)-eicosatetraenoyl-sn-glycero-3-phospho-1D-myo-inositol 4-phosphate + ATP = 1-octadecanoyl-2-(5Z,8Z,11Z,14Z)-eicosatetraenoyl-sn-glycero-3-phospho-1D-myo-inositol 4,5-bisphosphate + ADP + H(+). It catalyses the reaction 1-octadecanoyl-2-(9Z)-octadecenoyl-sn-glycero-3-phospho-1D-myo-inositol 4-phosphate + ATP = 1-octadecanoyl-2-(9Z)-octadecenoyl-sn-glycero-3-phospho-1D-myo-inositol 4,5-bisphosphate + ADP + H(+). The enzyme catalyses 1-octadecanoyl-2-(9Z)-octadecenoyl-sn-glycero-3-phospho-1D-myo-inositol + ATP = 1-octadecanoyl-2-(9Z)-octadecenoyl-sn-glycero-3-phospho-1D-myo-inositol 5-phosphate + ADP + H(+). The catalysed reaction is 1-octadecanoyl-2-(9Z,12Z)-octadecadienoyl-sn-glycero-3-phospho-1D-myo-inositol + ATP = 1-octadecanoyl-2-(9Z,12Z)-octadecadienoyl-sn-glycero-3-phospho-1D-myo-inositol 5-phosphate + ADP + H(+). It carries out the reaction 1-octadecanoyl-2-(5Z,8Z,11Z,14Z-eicosatetraenoyl)-sn-glycero-3-phospho-(1D-myo-inositol) + ATP = 1-octadecanoyl-2-(5Z,8Z,11Z,14Z)-eicosatetraenoyl-sn-glycero-3-phospho-1D-myo-inositol 5-phosphate + ADP + H(+). It catalyses the reaction 1,2-di-(9Z,12Z)-octadecadienoyl-sn-glycero-3-phospho-1D-myo-inositol + ATP = 1,2-di(9Z,12Z)-octadecadienoyl-sn-glycero-3-phospho-1D-myo-inositol 5-phosphate + ADP + H(+). Its function is as follows. Catalyzes the phosphorylation of phosphatidylinositol 4-phosphate (PtdIns(4)P/PI4P) to form phosphatidylinositol 4,5-bisphosphate (PtdIns(4,5)P2/PIP2), a lipid second messenger that regulates several cellular processes such as signal transduction, vesicle trafficking, actin cytoskeleton dynamics, cell adhesion, and cell motility. PtdIns(4,5)P2 can directly act as a second messenger or can be utilized as a precursor to generate other second messengers: inositol 1,4,5-trisphosphate (IP3), diacylglycerol (DAG) or phosphatidylinositol-3,4,5-trisphosphate (PtdIns(3,4,5)P3/PIP3). Mediates RAC1-dependent reorganization of actin filaments. Contributes to the activation of phospholipase PLD2. Together with PIP5K1A, is required, after stimulation by G-protein coupled receptors, for the synthesis of IP3 that will induce stable platelet adhesion. The sequence is that of Phosphatidylinositol 4-phosphate 5-kinase type-1 beta from Rattus norvegicus (Rat).